Consider the following 367-residue polypeptide: tRNA-specific 2-thiouridylase MnmA (367 aa).

Residues 13–20 (GLSGGVDS) and M39 each bind ATP. The segment at 99–101 (NPD) is interaction with target base in tRNA. Residue C104 is the Nucleophile of the active site. A disulfide bridge links C104 with C200. G128 contributes to the ATP binding site. An interaction with tRNA region spans residues 150–152 (KDQ). The active-site Cysteine persulfide intermediate is C200. The segment at 307 to 308 (RY) is interaction with tRNA.

It belongs to the MnmA/TRMU family.

The protein resides in the cytoplasm. The catalysed reaction is S-sulfanyl-L-cysteinyl-[protein] + uridine(34) in tRNA + AH2 + ATP = 2-thiouridine(34) in tRNA + L-cysteinyl-[protein] + A + AMP + diphosphate + H(+). Its function is as follows. Catalyzes the 2-thiolation of uridine at the wobble position (U34) of tRNA, leading to the formation of s(2)U34. This is tRNA-specific 2-thiouridylase MnmA from Neisseria meningitidis serogroup C (strain 053442).